A 201-amino-acid chain; its full sequence is Small ribosomal subunit protein uS4c (201 aa).

The tract at residues 20–39 is disordered; that stretch reads GLTRKTPKSGSNLKKKFHSG. One can recognise an S4 RNA-binding domain in the interval 89–150; the sequence is MRLDNILFRL…NQRSKRLVQN (62 aa).

The protein belongs to the universal ribosomal protein uS4 family. Part of the 30S ribosomal subunit. Contacts protein S5. The interaction surface between S4 and S5 is involved in control of translational fidelity.

The protein localises to the plastid. It is found in the chloroplast. Functionally, one of the primary rRNA binding proteins, it binds directly to 16S rRNA where it nucleates assembly of the body of the 30S subunit. Its function is as follows. With S5 and S12 plays an important role in translational accuracy. In Oryza nivara (Indian wild rice), this protein is Small ribosomal subunit protein uS4c (rps4).